We begin with the raw amino-acid sequence, 418 residues long: Gamma-glutamyl phosphate reductase (418 aa).

Residues Met1–Ser18 are compositionally biased toward basic and acidic residues. The segment at Met1–Ser22 is disordered.

The protein belongs to the gamma-glutamyl phosphate reductase family.

It localises to the cytoplasm. It carries out the reaction L-glutamate 5-semialdehyde + phosphate + NADP(+) = L-glutamyl 5-phosphate + NADPH + H(+). Its pathway is amino-acid biosynthesis; L-proline biosynthesis; L-glutamate 5-semialdehyde from L-glutamate: step 2/2. In terms of biological role, catalyzes the NADPH-dependent reduction of L-glutamate 5-phosphate into L-glutamate 5-semialdehyde and phosphate. The product spontaneously undergoes cyclization to form 1-pyrroline-5-carboxylate. The chain is Gamma-glutamyl phosphate reductase from Syntrophus aciditrophicus (strain SB).